Here is a 466-residue protein sequence, read N- to C-terminus: MADQFYLENIDEFVTDQNKIVTYKWLSYTLGVHVNQAKQMLYDYVERKRKENSGAQLHVTYLVSGSLIQNGHSCHKVAVVREDKLEAVKSKLAVTASVHVYSIQKAMLKDSGPLFNTDYDILKSNLQNCSKFSAIQCAAAVPRAPAESSSSEKLEQSDPPVSPEMQASDELTTNGHGPPVPKQSSQQPKGIMGMFASKAASKAQDANKETKTEAKEVMNSEKNNENLLLSGYWESMIVLFQAQCINKLKVNLDSEQEVKEEKKVEQPPLSVTEPKLAAPVDLKKSSKKAEPVRMQQKEKKRRKQMELSDDETKETENMKKKRRRIKLPESDSSEDEVIPDSPGAYEAESPSPPPPSPSPEPVLKTEPEPPPVKGSDGENKRKRKRVLKSKTFTDEEGCMVTEKVYESESCTDSEEELKMKTSSVHRPPAMAVKKEPKEERKGPKKGTAAMGKANRQVAITGFFQRK.

A2 is modified (N-acetylalanine). 2 disordered regions span residues 145–218 (PAES…KEVM) and 255–466 (EQEV…FQRK). Basic and acidic residues-rich tracts occupy residues 205–218 (DANK…KEVM), 255–265 (EQEVKEEKKVE), and 281–297 (DLKK…MQQK). K259 participates in a covalent cross-link: Glycyl lysine isopeptide (Lys-Gly) (interchain with G-Cter in SUMO); alternate. K259 is covalently cross-linked (Glycyl lysine isopeptide (Lys-Gly) (interchain with G-Cter in SUMO2); alternate). K262 is covalently cross-linked (Glycyl lysine isopeptide (Lys-Gly) (interchain with G-Cter in SUMO2)). The residue at position 308 (S308) is a Phosphoserine. Pro residues predominate over residues 350-360 (PSPPPPSPSPE). A phosphoserine mark is found at S407 and S409. T411 is modified (phosphothreonine). Residue S413 is modified to Phosphoserine. A compositionally biased stretch (basic and acidic residues) spans 432–441 (VKKEPKEERK). K433 participates in a covalent cross-link: Glycyl lysine isopeptide (Lys-Gly) (interchain with G-Cter in SUMO); alternate. K433 participates in a covalent cross-link: Glycyl lysine isopeptide (Lys-Gly) (interchain with G-Cter in SUMO2); alternate. Residues 456-463 (QVAITGFF) carry the PIP-box motif.

As to quaternary structure, component of both the DNA polymerase delta and DNA polymerase zeta complexes. The tetrameric DNA polymerase delta complex (Pol-delta4), which consists of POLD1/p125, POLD2/p50, POLD3/p66/p68 and POLD4/p12, with POLD1 bearing DNA polymerase and 3' to 5' proofreading exonuclease activities. Within this complex, directly interacts with POLD2. Following stress caused by DNA damaging agents or by replication stress, POLD4 is degraded and Pol-delta4 is converted into a trimeric form of the complex (Pol-delta3), which consists of POLD1, POLD2 and POLD3. Pol-delta3 is the major form occurring at S phase replication sites, as well as DNA damage sites. Directly interacts with PCNA, as do POLD1 and POLD4; this interaction stimulates Pol-delta polymerase activity. Component of the DNA polymerase zeta complex (POLZ), which consists of REV3L, MAD2L2, POLD2 and POLD3, with REV3L bearing DNA polymerase catalytic activity. The DNA polymerase delta complex interacts with POLDIP2; this interaction is probably mediated through direct binding to POLD2. Ubiquitinated, but not targeted to the proteasome. Sumoylated. Sumoylation by SUMO3 may be predominant.

The protein resides in the cytoplasm. It localises to the nucleus. Functionally, accessory component of both the DNA polymerase delta complex and the DNA polymerase zeta complex. As a component of the trimeric and tetrameric DNA polymerase delta complexes (Pol-delta3 and Pol-delta4, respectively), plays a role in high fidelity genome replication, including in lagging strand synthesis, and repair. Required for optimal Pol-delta activity. Stabilizes the Pol-delta complex and plays a major role in Pol-delta stimulation by PCNA. Pol-delta3 and Pol-delta4 are characterized by the absence or the presence of POLD4. They exhibit differences in catalytic activity. Most notably, Pol-delta3 shows higher proofreading activity than Pol-delta4. Although both Pol-delta3 and Pol-delta4 process Okazaki fragments in vitro, Pol-delta3 may also be better suited to fulfill this task, exhibiting near-absence of strand displacement activity compared to Pol-delta4 and stalling on encounter with the 5'-blocking oligonucleotides. Pol-delta3 idling process may avoid the formation of a gap, while maintaining a nick that can be readily ligated. Along with DNA polymerase kappa, DNA polymerase delta carries out approximately half of nucleotide excision repair (NER) synthesis following UV irradiation. In this context, POLD3, along with PCNA and RFC1-replication factor C complex, is required to recruit POLD1, the catalytic subunit of the polymerase delta complex, to DNA damage sites. Under conditions of DNA replication stress, required for the repair of broken replication forks through break-induced replication (BIR). Involved in the translesion synthesis (TLS) of templates carrying O6-methylguanine or abasic sites performed by Pol-delta4, independently of DNA polymerase zeta (REV3L) or eta (POLH). Facilitates abasic site bypass by DNA polymerase delta by promoting extension from the nucleotide inserted opposite the lesion. Also involved in TLS, as a component of the tetrameric DNA polymerase zeta complex. Along with POLD2, dramatically increases the efficiency and processivity of DNA synthesis of the DNA polymerase zeta complex compared to the minimal zeta complex, consisting of only REV3L and REV7. The protein is DNA polymerase delta subunit 3 (POLD3) of Bos taurus (Bovine).